Here is a 285-residue protein sequence, read N- to C-terminus: Small ribosomal subunit biogenesis GTPase RsgA (285 aa).

The 155-residue stretch at 61–215 (KNQLIRPKVA…IIDSPGFSSF (155 aa)) folds into the CP-type G domain. GTP is bound by residues 110–113 (TKID) and 159–167 (GQTGVGKTS). Positions 239, 244, 246, and 254 each coordinate Zn(2+).

Belongs to the TRAFAC class YlqF/YawG GTPase family. RsgA subfamily. As to quaternary structure, monomer. Associates with 30S ribosomal subunit, binds 16S rRNA. Zn(2+) serves as cofactor.

The protein resides in the cytoplasm. In terms of biological role, one of several proteins that assist in the late maturation steps of the functional core of the 30S ribosomal subunit. Helps release RbfA from mature subunits. May play a role in the assembly of ribosomal proteins into the subunit. Circularly permuted GTPase that catalyzes slow GTP hydrolysis, GTPase activity is stimulated by the 30S ribosomal subunit. The protein is Small ribosomal subunit biogenesis GTPase RsgA of Mesomycoplasma hyopneumoniae (strain J / ATCC 25934 / NCTC 10110) (Mycoplasma hyopneumoniae).